The sequence spans 300 residues: Enoyl-CoA hydratase domain-containing protein 3, mitochondrial (300 aa).

The N-terminal 66 residues, 1-66, are a transit peptide targeting the mitochondrion; it reads MAVVAGLRAF…RNIVLSNPRR (66 aa). The interval 34–53 is disordered; the sequence is GSAGPAGSESEPRLTSTRQQ. Lys-110 is subject to N6-succinyllysine.

It belongs to the enoyl-CoA hydratase/isomerase family.

It localises to the mitochondrion. May play a role in fatty acid biosynthesis and insulin sensitivity. The protein is Enoyl-CoA hydratase domain-containing protein 3, mitochondrial of Mus musculus (Mouse).